The primary structure comprises 454 residues: Metacaspase-1A (454 aa).

A compositionally biased stretch (gly residues) spans 1–16 (MSYGYPGQGYGPGGGH). The tract at residues 1–129 (MSYGYPGQGY…GHQTRNQGSH (129 aa)) is disordered. Composition is skewed to low complexity over residues 38-47 (YSNPGQGQYN), 59-80 (YHQQ…YPPQ), 88-101 (GQQQ…HSQR), and 109-120 (GYDIYGYPIGSG). Residues histidine 244 and cysteine 300 contribute to the active site.

This sequence belongs to the peptidase C14B family.

Functionally, involved in cell death (apoptosis). The chain is Metacaspase-1A (casA) from Neurospora crassa (strain ATCC 24698 / 74-OR23-1A / CBS 708.71 / DSM 1257 / FGSC 987).